The following is a 243-amino-acid chain: Probable phosphatase CLD_1129 (243 aa).

Positions 8, 10, 16, 41, 74, 102, 132, 192, and 194 each coordinate Zn(2+).

It belongs to the PHP family. The cofactor is Zn(2+).

The polypeptide is Probable phosphatase CLD_1129 (Clostridium botulinum (strain Okra / Type B1)).